The following is a 246-amino-acid chain: MPRYKLIIEYDGTPYCGWQIQENGPSIQGALEDAAKAICGEAIRVRGAGRTDAGVHALAQVAHCDVPKQLPPGRLRDALNAHLRPQPIGVITAEIVPDDFEARFSAIKRHYVYRISNRRANLALAINRAWRVPRRLDSDAMHEAAQRLIGKHDFTTFRDTECQAKSPDKTLDQLDVIRDGDEIRIVTSARSFLHSQVRSMVGSLVWVGEGRWSADDLAAALAARSRSACGPVAPPDGLYLVKVDYE.

Asp52 acts as the Nucleophile in catalysis. Tyr111 serves as a coordination point for substrate.

This sequence belongs to the tRNA pseudouridine synthase TruA family. In terms of assembly, homodimer.

The catalysed reaction is uridine(38/39/40) in tRNA = pseudouridine(38/39/40) in tRNA. Functionally, formation of pseudouridine at positions 38, 39 and 40 in the anticodon stem and loop of transfer RNAs. This chain is tRNA pseudouridine synthase A, found in Rhodopseudomonas palustris (strain BisA53).